Reading from the N-terminus, the 213-residue chain is Orotate phosphoribosyltransferase (213 aa).

5-phospho-alpha-D-ribose 1-diphosphate is bound at residue lysine 26. 34–35 (FF) serves as a coordination point for orotate. 5-phospho-alpha-D-ribose 1-diphosphate is bound by residues 72–73 (YK), arginine 99, lysine 100, lysine 103, histidine 105, and 124–132 (DDVITAGTA). Residues threonine 128 and arginine 156 each coordinate orotate.

The protein belongs to the purine/pyrimidine phosphoribosyltransferase family. PyrE subfamily. Homodimer. It depends on Mg(2+) as a cofactor.

The enzyme catalyses orotidine 5'-phosphate + diphosphate = orotate + 5-phospho-alpha-D-ribose 1-diphosphate. It participates in pyrimidine metabolism; UMP biosynthesis via de novo pathway; UMP from orotate: step 1/2. Its function is as follows. Catalyzes the transfer of a ribosyl phosphate group from 5-phosphoribose 1-diphosphate to orotate, leading to the formation of orotidine monophosphate (OMP). The sequence is that of Orotate phosphoribosyltransferase from Photobacterium profundum (strain SS9).